The sequence spans 420 residues: Reticulon-4 receptor-like 2 (420 aa).

Positions 1–46 (MLPGLRRLLQAPASACLLLMLLALPLAAPSCPMLCTCYSSPPTVSC) are cleaved as a signal peptide. 2 cysteine pairs are disulfide-bonded: Cys31–Cys37 and Cys35–Cys46. The 14-residue stretch at 47–60 (QANNFSSVPLSLPP) folds into the LRRNT domain. Residue Asn50 is glycosylated (N-linked (GlcNAc...) asparagine). LRR repeat units follow at residues 61 to 82 (STQRLFLQNNLIRTLRPGTFGS), 83 to 104 (NLLTLWLFSNNLSTIYPGTFRH), 107 to 129 (ALEELDLGDNRHLRSLEPDTFQG), 132 to 153 (RLQSLHLYRCQLSSLPGNIFRG), 156 to 177 (SLQYLYLQENSLLHLQDDLFAD), 180 to 201 (NLSHLFLHGNRLRLLTEHVFRG), 204 to 225 (SLDRLLLHGNRLQGVHRAAFRG), and 228 to 249 (RLTILYLFNNSLASLPGEALAD). An N-linked (GlcNAc...) asparagine glycan is attached at Asn93. Asn236 is a glycosylation site (N-linked (GlcNAc...) asparagine). The 52-residue stretch at 261–312 (NPWACDCRARPLWAWFQRARVSSSDVTCATPPERQGRDLRALREADFQACPP) folds into the LRRCT domain. 2 disulfides stabilise this stretch: Cys265-Cys288 and Cys267-Cys310. The disordered stretch occupies residues 308–399 (QACPPAAPTR…CQAPPDSRGP (92 aa)). Residues 315–327 (PTRPGSRARGNSS) form an important for interaction with MAG region. Residues 351–360 (LPAEDSRGRQ) show a composition bias toward basic and acidic residues. Cys390 carries the GPI-anchor amidated cysteine lipid modification. Positions 391–420 (QAPPDSRGPALSAGLPSPLLCLLLLVPHHL) are cleaved as a propeptide — removed in mature form.

The protein belongs to the Nogo receptor family. As to quaternary structure, interaction with MAG is controversial, and may be indirect. Does not interact with MAG, OMG and RTN4. Interacts with MAG. In terms of processing, undergoes zinc metalloproteinase-mediated ectodomain shedding in neuroblastoma cells; is released both as a full-length ectodomain and an N-terminal fragment containing the leucine-rich repeat (LRR) region of the protein. Post-translationally, N-glycosylated. Highly expressed in brain and liver. Expressed at lower levels in kidney, mammary gland, placenta, skeletal muscle, spleen and thyroid.

Its subcellular location is the cell membrane. The protein localises to the membrane raft. The protein resides in the cell projection. It localises to the dendrite. It is found in the perikaryon. Its subcellular location is the axon. Cell surface receptor that plays a functionally redundant role in the inhibition of neurite outgrowth mediated by MAG. Plays a functionally redundant role in postnatal brain development. Contributes to normal axon migration across the brain midline and normal formation of the corpus callosum. Does not seem to play a significant role in regulating axon regeneration in the adult central nervous system. Protects motoneurons against apoptosis; protection against apoptosis is probably mediated by MAG. Like other family members, plays a role in restricting the number dendritic spines and the number of synapses that are formed during brain development. Signaling mediates activation of Rho and downstream reorganization of the actin cytoskeleton. This is Reticulon-4 receptor-like 2 from Homo sapiens (Human).